The sequence spans 292 residues: MILIIYLTKIMGDEMTSMDMFFFLFIFLLFIYPEMMMRYRIMKRLRCIREIERQRGTRVIAMIHRQEALTFLGIPIYKFITIEDSEEILRAIRLTPEDMPIDLIIHTPGGLALASEQIALALKEHKAKTTVIIPHYAMSGGSLIALAADEIIMDKNAVMGPVDPQIGQYPAASILEAYYRKGEKVSDETLILVDISKKAIKQMEEFVYELLKDKYGDEKAKEIAKKLTSGTWTHDYPLTVSKLKELGIEVNTNVPRKVYELLELYPQPMGAKPSVYYIPVPYSKKESEKNAK.

A helical transmembrane segment spans residues 17-37 (SMDMFFFLFIFLLFIYPEMMM).

It to M.jannaschii MJ0137.

It localises to the membrane. This is an uncharacterized protein from Methanocaldococcus jannaschii (strain ATCC 43067 / DSM 2661 / JAL-1 / JCM 10045 / NBRC 100440) (Methanococcus jannaschii).